Here is a 176-residue protein sequence, read N- to C-terminus: ATP-dependent protease subunit HslV (176 aa).

Residue Thr6 is part of the active site. Residues Gly161, Cys164, and Thr167 each coordinate Na(+).

Belongs to the peptidase T1B family. HslV subfamily. As to quaternary structure, a double ring-shaped homohexamer of HslV is capped on each side by a ring-shaped HslU homohexamer. The assembly of the HslU/HslV complex is dependent on binding of ATP.

It is found in the cytoplasm. The catalysed reaction is ATP-dependent cleavage of peptide bonds with broad specificity.. Its activity is regulated as follows. Allosterically activated by HslU binding. Functionally, protease subunit of a proteasome-like degradation complex believed to be a general protein degrading machinery. The polypeptide is ATP-dependent protease subunit HslV (Thermotoga sp. (strain RQ2)).